A 322-amino-acid chain; its full sequence is Cytochrome c biogenesis protein CcsA (322 aa).

The next 8 helical transmembrane spans lie at 17–37 (VVSI…IVGL), 44–64 (GMIA…IYLG), 71–91 (LYES…VPYF), 98–118 (LSAL…SGLL), 143–163 (MVLG…LLVI), 225–245 (VISL…VWAN), 258–273 (ETWA…IYLH), and 286–306 (AIVA…VNLL).

This sequence belongs to the CcmF/CycK/Ccl1/NrfE/CcsA family. May interact with Ccs1.

The protein resides in the plastid. The protein localises to the chloroplast thylakoid membrane. Required during biogenesis of c-type cytochromes (cytochrome c6 and cytochrome f) at the step of heme attachment. This is Cytochrome c biogenesis protein CcsA from Vitis vinifera (Grape).